A 263-amino-acid polypeptide reads, in one-letter code: Probable WRKY transcription factor 62 (263 aa).

Positions 59–104 (DHQDDQSNNSSPQDSSPVLESSRKPLHKRGRKTSMAESSDYHRHES) are disordered. Over residues 64 to 74 (QSNNSSPQDSS) the composition is skewed to low complexity. Residues 104–174 (SSTPIYHDGF…GQHICQLHQA (71 aa)) constitute a DNA-binding region (WRKY).

This sequence belongs to the WRKY group III family.

The protein resides in the nucleus. Functionally, transcription factor. Interacts specifically with the W box (5'-(T)TGAC[CT]-3'), a frequently occurring elicitor-responsive cis-acting element. The protein is Probable WRKY transcription factor 62 (WRKY62) of Arabidopsis thaliana (Mouse-ear cress).